We begin with the raw amino-acid sequence, 545 residues long: Cryptochrome-1 (545 aa).

In terms of domain architecture, Photolyase/cryptochrome alpha/beta spans 3–138; it reads VNNILWFRHG…KCVEKVSHTL (136 aa). Residues R236, S264, S266, Q307, H374, 406–408, C412, and N415 contribute to the FAD site; that span reads DAD.

The protein belongs to the DNA photolyase class-1 family. As to quaternary structure, interacts with tim and per; promoted by light conditions. FAD is required as a cofactor.

The protein resides in the cytoplasm. Its subcellular location is the perinuclear region. The protein localises to the nucleus. Blue light-dependent regulator that is the input of the circadian feedback loop. Has no photolyase activity for cyclobutane pyrimidine dimers or 6-4 photoproducts. Regulation of expression by light suggests a role in photoreception for locomotor activity rhythms. Functions, together with per, as a transcriptional repressor required for the oscillation of peripheral circadian clocks and for the correct specification of clock cells. Genes directly activated by the transcription factors Clock (Clk) and cycle (cyc) are repressed by cry. The sequence is that of Cryptochrome-1 from Aedes aegypti (Yellowfever mosquito).